A 389-amino-acid chain; its full sequence is 5-hydroxytryptamine receptor 1B (389 aa).

At methionine 1–leucine 45 the chain is on the extracellular side. N-linked (GlcNAc...) asparagine glycans are attached at residues asparagine 24 and asparagine 31. The chain crosses the membrane as a helical span at residues proline 46–alanine 71. Residues threonine 72 to tyrosine 85 are Cytoplasmic-facing. Residues leucine 86–valine 110 traverse the membrane as a helical segment. Residues threonine 111 to glutamine 118 are Extracellular-facing. Residues alanine 119–leucine 144 form a helical membrane-spanning segment. A disulfide bridge links cysteine 121 with cysteine 198. Ergotamine-binding residues include aspartate 128 and threonine 133. A DRY motif; important for ligand-induced conformation changes and signaling motif is present at residues aspartate 145–tyrosine 147. Residues aspartate 145–arginine 164 are Cytoplasmic-facing. The helical transmembrane segment at alanine 165–proline 183 threads the bilayer. Over phenylalanine 184–histidine 204 the chain is Extracellular. Valine 200 contacts ergotamine. A helical transmembrane segment spans residues valine 205–glycine 228. Residues arginine 229–threonine 314 lie on the Cytoplasmic side of the membrane. Residues leucine 315 to methionine 336 traverse the membrane as a helical segment. Residues proline 337–histidine 346 lie on the Extracellular side of the membrane. A helical membrane pass occupies residues methionine 347–threonine 369. The NPxxY motif; important for ligand-induced conformation changes and signaling signature appears at asparagine 364 to tyrosine 368. At methionine 370–threonine 389 the chain is on the cytoplasmic side. A lipid anchor (S-palmitoyl cysteine) is attached at cysteine 387.

This sequence belongs to the G-protein coupled receptor 1 family. In terms of assembly, homodimer. Heterodimer with HTR1D. Post-translationally, phosphorylated. Desensitization of the receptor may be mediated by its phosphorylation. Palmitoylated.

The protein resides in the cell membrane. In terms of biological role, G-protein coupled receptor for 5-hydroxytryptamine (serotonin). Also functions as a receptor for ergot alkaloid derivatives, various anxiolytic and antidepressant drugs and other psychoactive substances, such as lysergic acid diethylamide (LSD). Ligand binding causes a conformation change that triggers signaling via guanine nucleotide-binding proteins (G proteins) and modulates the activity of downstream effectors, such as adenylate cyclase. HTR1B is coupled to G(i)/G(o) G alpha proteins and mediates inhibitory neurotransmission by inhibiting adenylate cyclase activity. Arrestin family members inhibit signaling via G proteins and mediate activation of alternative signaling pathways. Regulates the release of 5-hydroxytryptamine, dopamine and acetylcholine in the brain, and thereby affects neural activity, nociceptive processing, pain perception, mood and behavior. Besides, plays a role in vasoconstriction of cerebral arteries. The protein is 5-hydroxytryptamine receptor 1B (HTR1B) of Cavia porcellus (Guinea pig).